The sequence spans 364 residues: Dihydroorotate dehydrogenase (quinone) (364 aa).

Residues 61 to 65 (AGFDK) and Thr85 each bind FMN. Lys65 lines the substrate pocket. 110-114 (NRMGF) serves as a coordination point for substrate. The FMN site is built by Asn139 and Asn170. Asn170 is a binding site for substrate. The Nucleophile role is filled by Ser173. A substrate-binding site is contributed by Asn175. Residues Lys214 and Ala242 each contribute to the FMN site. A substrate-binding site is contributed by 243-244 (NT). FMN contacts are provided by residues Gly266, Gly295, and 316–317 (YS).

It belongs to the dihydroorotate dehydrogenase family. Type 2 subfamily. As to quaternary structure, monomer. It depends on FMN as a cofactor.

It localises to the cell membrane. It carries out the reaction (S)-dihydroorotate + a quinone = orotate + a quinol. The protein operates within pyrimidine metabolism; UMP biosynthesis via de novo pathway; orotate from (S)-dihydroorotate (quinone route): step 1/1. Its function is as follows. Catalyzes the conversion of dihydroorotate to orotate with quinone as electron acceptor. The polypeptide is Dihydroorotate dehydrogenase (quinone) (Rhodopseudomonas palustris (strain TIE-1)).